The primary structure comprises 363 residues: NAD(P)H-quinone oxidoreductase subunit 1, chloroplastic (363 aa).

The next 6 helical transmembrane spans lie at 27–47, 98–118, 127–147, 248–268, 300–320, and 336–356; these read IWLLVPIFTPVSGITIGVLVI, FSIGPSIAIISILLSYSVIPF, LSIGVFLWIAISSIAPIGLLM, YSGIKFGLFYVASYLNLLVSS, VFGTTIGIFITLAKAYLFLFI, and LLNLGWKFLLPISLGNLLLTT.

It belongs to the complex I subunit 1 family. As to quaternary structure, NDH is composed of at least 16 different subunits, 5 of which are encoded in the nucleus.

It is found in the plastid. Its subcellular location is the chloroplast thylakoid membrane. The enzyme catalyses a plastoquinone + NADH + (n+1) H(+)(in) = a plastoquinol + NAD(+) + n H(+)(out). It carries out the reaction a plastoquinone + NADPH + (n+1) H(+)(in) = a plastoquinol + NADP(+) + n H(+)(out). Its function is as follows. NDH shuttles electrons from NAD(P)H:plastoquinone, via FMN and iron-sulfur (Fe-S) centers, to quinones in the photosynthetic chain and possibly in a chloroplast respiratory chain. The immediate electron acceptor for the enzyme in this species is believed to be plastoquinone. Couples the redox reaction to proton translocation, and thus conserves the redox energy in a proton gradient. The sequence is that of NAD(P)H-quinone oxidoreductase subunit 1, chloroplastic from Platanus occidentalis (Sycamore).